The sequence spans 234 residues: Transcriptional regulatory protein CseB (234 aa).

The Response regulatory domain maps to 6-119 (HVLFVEDDDV…VLVARIRAVL (114 aa)). Aspartate 55 carries the 4-aspartylphosphate modification. The ompR/PhoB-type DNA-binding region spans 140–234 (GGVLTFGDLE…VRGFGYKLKA (95 aa)).

Post-translationally, phosphorylated by CseC.

It localises to the cytoplasm. Member of the two-component regulatory system CseB/CseC involved in the stability of the cell envelope. CseB activates transcription of RNA polymerase sigma-E factor, in response to changes in the cell envelope. This Streptomyces coelicolor (strain ATCC BAA-471 / A3(2) / M145) protein is Transcriptional regulatory protein CseB (cseB).